Reading from the N-terminus, the 1129-residue chain is Phytochrome A type 3 (1129 aa).

The span at 1–21 (MSSSRPASSSSSRNRQSSQAR) shows a compositional bias: low complexity. Residues 1–24 (MSSSRPASSSSSRNRQSSQARVLA) are disordered. In terms of domain architecture, GAF spans 217–402 (SMEVLCNTVV…VFAVHVNREF (186 aa)). C322 serves as a coordination point for phytochromobilin. PAS domains follow at residues 618 to 688 (VTSE…LQGK) and 748 to 822 (VEGD…VSLC). One can recognise a Histidine kinase domain in the interval 902–1122 (YMRHAINNPL…TFIITAELAS (221 aa)).

It belongs to the phytochrome family. In terms of assembly, homodimer. Contains one covalently linked phytochromobilin chromophore.

Regulatory photoreceptor which exists in two forms that are reversibly interconvertible by light: the Pr form that absorbs maximally in the red region of the spectrum and the Pfr form that absorbs maximally in the far-red region. Photoconversion of Pr to Pfr induces an array of morphogenic responses, whereas reconversion of Pfr to Pr cancels the induction of those responses. Pfr controls the expression of a number of nuclear genes including those encoding the small subunit of ribulose-bisphosphate carboxylase, chlorophyll A/B binding protein, protochlorophyllide reductase, rRNA, etc. It also controls the expression of its own gene(s) in a negative feedback fashion. This chain is Phytochrome A type 3 (PHYA3), found in Avena sativa (Oat).